A 446-amino-acid polypeptide reads, in one-letter code: Exodeoxyribonuclease 7 large subunit (446 aa).

This sequence belongs to the XseA family. Heterooligomer composed of large and small subunits.

It localises to the cytoplasm. It carries out the reaction Exonucleolytic cleavage in either 5'- to 3'- or 3'- to 5'-direction to yield nucleoside 5'-phosphates.. Its function is as follows. Bidirectionally degrades single-stranded DNA into large acid-insoluble oligonucleotides, which are then degraded further into small acid-soluble oligonucleotides. The sequence is that of Exodeoxyribonuclease 7 large subunit from Shewanella denitrificans (strain OS217 / ATCC BAA-1090 / DSM 15013).